We begin with the raw amino-acid sequence, 188 residues long: GMP synthase [glutamine-hydrolyzing] subunit A (188 aa).

Residues 2-188 enclose the Glutamine amidotransferase type-1 domain; it reads KIAVIYFGGQ…FKNFIEACKK (187 aa). The active-site Nucleophile is Cys79. Active-site residues include His166 and Glu168.

In terms of assembly, heterodimer composed of a glutamine amidotransferase subunit (A) and a GMP-binding subunit (B).

It carries out the reaction XMP + L-glutamine + ATP + H2O = GMP + L-glutamate + AMP + diphosphate + 2 H(+). The protein operates within purine metabolism; GMP biosynthesis; GMP from XMP (L-Gln route): step 1/1. Its function is as follows. Catalyzes the synthesis of GMP from XMP. The polypeptide is GMP synthase [glutamine-hydrolyzing] subunit A (Sulfurisphaera tokodaii (strain DSM 16993 / JCM 10545 / NBRC 100140 / 7) (Sulfolobus tokodaii)).